The chain runs to 509 residues: Photosystem II CP47 reaction center protein (509 aa).

6 helical membrane passes run 21-36, 101-115, 140-156, 203-218, 237-252, and 457-472; these read AVHLMHTALVAGWAGS, IGLSGLLFLAAIWHW, GIHLFLSGLLCFGFGAF, IAAGIVGILAGLFHLS, VLSSSISAVFFAAFIV, and SFALIFFFGHLWHGGR.

This sequence belongs to the PsbB/PsbC family. PsbB subfamily. In terms of assembly, PSII is composed of 1 copy each of membrane proteins PsbA, PsbB, PsbC, PsbD, PsbE, PsbF, PsbH, PsbI, PsbJ, PsbK, PsbL, PsbM, PsbT, PsbX, PsbY, PsbZ, Psb30/Ycf12, at least 3 peripheral proteins of the oxygen-evolving complex and a large number of cofactors. It forms dimeric complexes. Binds multiple chlorophylls. PSII binds additional chlorophylls, carotenoids and specific lipids. serves as cofactor.

Its subcellular location is the plastid. The protein resides in the cyanelle thylakoid membrane. In terms of biological role, one of the components of the core complex of photosystem II (PSII). It binds chlorophyll and helps catalyze the primary light-induced photochemical processes of PSII. PSII is a light-driven water:plastoquinone oxidoreductase, using light energy to abstract electrons from H(2)O, generating O(2) and a proton gradient subsequently used for ATP formation. The protein is Photosystem II CP47 reaction center protein of Cyanophora paradoxa.